Consider the following 403-residue polypeptide: MSEKGRLFTSESVTEGHPDKICDAVSDSVLDALLAADPRSRVAVETLVTTGQVHVVGEVTTTAKEAFADITNIVRERILDIGYDSSDKGFDGASCGVNIGIGAQSPDIAQGVDTAHEARVEGAADPLDAQGAGDQGLMFGYAINDTPELMPLPIALAHRLSRRLTEVRKNGVLPYLRPDGKTQVTIAYEDRVPVRLDTVVISTQHADDIDLVKTLDPDIREQVLKTVLDDLAHDTLDASAVRVLVNPTGKFVLGGPMGDAGLTGRKIIVDTYGGWARHGGGAFSGKDPSKVDRSAAYAMRWVAKNVVAAGLAERVEVQVAYAIGKAAPVGLFVETFGSEAVDPVKIEKAIGEVFDLRPGAIIRDLNLLRPIYAPTAAYGHFGRTDVDLPWERLDKVDDLKRAI.

Residue H17 participates in ATP binding. D19 is a Mg(2+) binding site. E45 contacts K(+). L-methionine contacts are provided by E58 and Q104. The tract at residues 104 to 114 (QSPDIAQGVDT) is flexible loop. Residues 179 to 181 (DGK), 250 to 251 (KF), D259, 265 to 266 (RK), A282, and K286 contribute to the ATP site. D259 serves as a coordination point for L-methionine. K290 serves as a coordination point for L-methionine.

Belongs to the AdoMet synthase family. In terms of assembly, homotetramer; dimer of dimers. Mg(2+) serves as cofactor. The cofactor is K(+).

Its subcellular location is the cytoplasm. It catalyses the reaction L-methionine + ATP + H2O = S-adenosyl-L-methionine + phosphate + diphosphate. It functions in the pathway amino-acid biosynthesis; S-adenosyl-L-methionine biosynthesis; S-adenosyl-L-methionine from L-methionine: step 1/1. Catalyzes the formation of S-adenosylmethionine (AdoMet) from methionine and ATP. The overall synthetic reaction is composed of two sequential steps, AdoMet formation and the subsequent tripolyphosphate hydrolysis which occurs prior to release of AdoMet from the enzyme. In Mycobacterium marinum (strain ATCC BAA-535 / M), this protein is S-adenosylmethionine synthase.